Here is a 150-residue protein sequence, read N- to C-terminus: UPF0756 membrane protein APL_0366 (150 aa).

4 consecutive transmembrane segments (helical) span residues 12–34 (LVVLIFLGVVGNNNSITIAATVL), 52–72 (HGLSIGIIILTIGVLSPIVSG), 82–102 (FLNWKMLLAVVAGIAVAWLGG), and 123–143 (IIGVALLGGVPVGPLIAAGIL).

This sequence belongs to the UPF0756 family.

Its subcellular location is the cell membrane. The polypeptide is UPF0756 membrane protein APL_0366 (Actinobacillus pleuropneumoniae serotype 5b (strain L20)).